The following is a 155-amino-acid chain: Ribosomal RNA large subunit methyltransferase H (155 aa).

S-adenosyl-L-methionine contacts are provided by residues Leu-72, Gly-103, and 122 to 127 (LSPLTL).

The protein belongs to the RNA methyltransferase RlmH family. As to quaternary structure, homodimer.

The protein resides in the cytoplasm. It catalyses the reaction pseudouridine(1915) in 23S rRNA + S-adenosyl-L-methionine = N(3)-methylpseudouridine(1915) in 23S rRNA + S-adenosyl-L-homocysteine + H(+). Specifically methylates the pseudouridine at position 1915 (m3Psi1915) in 23S rRNA. This is Ribosomal RNA large subunit methyltransferase H from Actinobacillus pleuropneumoniae serotype 5b (strain L20).